Here is a 190-residue protein sequence, read N- to C-terminus: Probable thymidylate kinase (190 aa).

An ATP-binding site is contributed by 9–16 (GIDGAGKT).

It belongs to the thymidylate kinase family.

The enzyme catalyses dTMP + ATP = dTDP + ADP. The sequence is that of Probable thymidylate kinase (tmk1) from Sulfurisphaera tokodaii (strain DSM 16993 / JCM 10545 / NBRC 100140 / 7) (Sulfolobus tokodaii).